We begin with the raw amino-acid sequence, 301 residues long: Probable alpha-L-glutamate ligase 1 (301 aa).

Positions 104 to 287 constitute an ATP-grasp domain; it reads LQLLSRKNIG…VAEKIIQFIE (184 aa). ATP is bound by residues Lys-141, 178 to 179, Asp-187, and 211 to 213; these read EY and RSN. The Mg(2+) site is built by Asp-248, Glu-260, and Asn-262. The Mn(2+) site is built by Asp-248, Glu-260, and Asn-262.

This sequence belongs to the RimK family. Mg(2+) serves as cofactor. The cofactor is Mn(2+).

The sequence is that of Probable alpha-L-glutamate ligase 1 from Shewanella frigidimarina (strain NCIMB 400).